The primary structure comprises 134 residues: MRCLISLVLGLLALEVALAQNLEEQVFNSVQSMFQKASPIEGTECIICQTNEECAQNAMCCPGSCGRTRKTPVNIGVPKAGFCPWNLLQTISSTGPCPMKIECSSDRECSGNMKCCNVDCVMTCTPPVPVITLQ.

The first 19 residues, M1–A19, serve as a signal peptide directing secretion. The 47-residue stretch at F27–V73 folds into the WAP 1; atypical domain. Cystine bridges form between C45-C65, C48-C60, C83-C116, C97-C120, C103-C115, and C109-C124. Residues G76 to V128 enclose the WAP 2 domain.

In terms of processing, no phosphate or carbohydrate binding could be detected; however, both cholesterol and triglyceride are associated with the mouse protein. In terms of tissue distribution, milk-specific; major protein component of milk whey.

Its subcellular location is the secreted. In terms of biological role, could be a protease inhibitor. May play an important role in mammary gland development and tissue remodeling. The protein is Whey acidic protein (Wap) of Mus musculus (Mouse).